Here is a 145-residue protein sequence, read N- to C-terminus: Maximins 3/H11 type 3 (145 aa).

The N-terminal stretch at 1–18 (MNFKYIVAVSFLIASAYA) is a signal peptide. Propeptides lie at residues 19 to 43 (RSVQNDEQSLSQRDVLEEEESLREI) and 75 to 122 (TAEE…TKKE). At Ile144 the chain carries Isoleucine amide.

The protein belongs to the bombinin family. As to expression, expressed by the skin glands.

It is found in the secreted. In terms of biological role, maximin-3 shows antibacterial activity against both Gram-positive and Gram-negative bacteria. It also shows antimicrobial activity against the fungus C.albicans, but not against A.flavus nor P.uticale. It has little hemolytic activity. It possess a significant cytotoxicity against tumor cell lines. It possess a significant anti-HIV activity. It shows high spermicidal activity. Its function is as follows. Maximin-H11 shows antimicrobial activity against bacteria and against the fungus C.albicans. Shows strong hemolytic activity. The sequence is that of Maximins 3/H11 type 3 from Bombina maxima (Giant fire-bellied toad).